The following is a 1485-amino-acid chain: MIERGKFRSLTLVNWNGFFARTFDLDELVTTLSGGNGAGKSTTMAAFVTALIPDLTLLHFRNTTEAGATSGSRDKGLHGKLRAGVCYSTLDVVNSRHQRVVVGVRLQQVAGRDRKVDIKPFTIQGLPTAIQPTEILTELVAERQARVLSLPELKERVEAMEGVQFKQFNSITDYHSLMFDLGVIPKRLRSSADRSKFYRLIEASLYGGISSAITRSLRDYLLPENSGVRKAFQDMEAALRENRMTLEAIRVTQSDRDLFKHLISEATSYVAADYMRHANERRIHLDSALVLRRDLFSSRKQLVTEQYRHVEMSRELAEQSGAESDLETDYQAASDHLNLVQTAMRQQEKIERYQSDLEELTYRLEEQSEVVSEASEQQADNEARAEAAELEVDELKSQLADYQQALDVQQTRAIQYQQALQALERARALCQLPELTADNAEEWLETFHAKEQEATESLLQLEQKLSVADAAHSQFEQAYQLVVNIAGEVSRSEAWQTARELLRDWPSQQHLAERVQPLRMRLSELEQRLRAQQDAERLLQEFCKRQGNAYQPEELEALQRELESQVEELSLSVSDAGERRMAMRQELEQLKLKIQELTARAPVWLAAQDALSQLSEQSGEALEDSRQVTEYMQQLLERERETTVERDEIAASKRAIEAQIERLSQPSGAEDARLIALAERFGGVLLSEIYDDVTIDDAPYFSALYGPSRHGIVVPDLSLVREHLQGLDDCPEDLYLIEGDPQSFDDSVFAVEEHEKAVVVKIADRQWRYSRYPEVPLFGRAARENRLETLYQERDRLAERYATLSFDVQKTQRTHQAFSRFIGSHLAVAFDADPEAEIRLLNTRRGEIERALNAHEDQNQQQRQQFDQAKEGISALNRLIPLVSLLLDETLTDRVEEITEELAEAQEAARYIQQHGVSLTKLEPLLSVLQSDPQQHEQLQESYVLAQNSQRLAKQQAFALTEVVQRRAHFSYTDSAGMLTENSDLNDKLRQRLEQAEAERTRAREQLRQYQSQFTQYSQVLASLKSSYDAKRDMLKELSQELVDIGVPADANAEARARARRDELHAALSTNRSRRNQLEKQLTFCEAEMDSLQKKLRKLERDYHQIREQVVNAKAGWCAVMRMVKDNGVERRLHRRELAYMDGDELRSMSDKALGALRLAVADNEHLRDVLRLSEDPKRPERKIQFYIAVYQHLRERIRQDIIRTDDPVEAIEQMEIELGRLTEELTAREQKLAISSKSVSNIIRKTIHREQNRIRMLNQGLQAVSFGQVKSVRLNVNVREAHATLLDVLSEQQEQHQDLFNSNRLTFSEALAKLYQRLNPQMDMGQRLPQTIGEELLDYRNYLELEVEVYRGADGWLRAESGALSTGEAIGTGMSILVMVVQSWEEESRRLRGKDISPCRLLFLDEAARLDAKSIATLFELCERLEMQLIIAAPENISPEKGTTYKLVRKVFQNHEHVHVVGLRGFANEIPSLPPIAAELQQGG.

34–41 (GGNGAGKS) serves as a coordination point for ATP. Coiled-coil stretches lie at residues 337–480 (LNLV…QAYQ) and 509–605 (QHLA…PVWL). The interval 666–783 (PSGAEDARLI…EVPLFGRAAR (118 aa)) is flexible hinge. Coiled coils occupy residues 835–915 (EAEI…IQQH) and 977–1116 (GMLT…AKAG).

The protein belongs to the SMC family. MukB subfamily. In terms of assembly, homodimerization via its hinge domain. Binds to DNA via its C-terminal region. Interacts, and probably forms a ternary complex, with MukE and MukF via its C-terminal region. The complex formation is stimulated by calcium or magnesium. Interacts with tubulin-related protein FtsZ.

It localises to the cytoplasm. Its subcellular location is the nucleoid. Functionally, plays a central role in chromosome condensation, segregation and cell cycle progression. Functions as a homodimer, which is essential for chromosome partition. Involved in negative DNA supercoiling in vivo, and by this means organize and compact chromosomes. May achieve or facilitate chromosome segregation by condensation DNA from both sides of a centrally located replisome during cell division. This Yersinia pseudotuberculosis serotype O:3 (strain YPIII) protein is Chromosome partition protein MukB.